A 190-amino-acid chain; its full sequence is DNA-invertase (190 aa).

The Resolvase/invertase-type recombinase catalytic domain maps to 2–135; it reads ATIGYIRVST…AGLAAARAQG (134 aa). Ser10 functions as the O-(5'-phospho-DNA)-serine intermediate in the catalytic mechanism. Positions 162 to 181 form a DNA-binding region, H-T-H motif; that stretch reads RQQLAIIFGIGVSTLYRYFP.

It belongs to the site-specific recombinase resolvase family.

Its function is as follows. A DNA fragment of approximately 900 base pairs, adjacent to the fljB (H2) gene, which specifies the synthesis of phase-2 flagellin, can exist in either orientation with respect to fljB. The orientation of the inversion region controls expression of fljB. The hin gene occupies about two-thirds of the inversion region; it is required for the inversion of the fljB controlling region. The sequence is that of DNA-invertase (hin) from Salmonella abortus-equi.